The sequence spans 260 residues: 4-hydroxy-tetrahydrodipicolinate reductase (260 aa).

NAD(+)-binding positions include 12-17 (GFRGKM), 92-94 (GTT), and 118-121 (APNF). The Proton donor/acceptor role is filled by His148. (S)-2,3,4,5-tetrahydrodipicolinate is bound at residue His149. Lys152 serves as the catalytic Proton donor. 158 to 159 (GT) contacts (S)-2,3,4,5-tetrahydrodipicolinate.

This sequence belongs to the DapB family.

The protein localises to the cytoplasm. The catalysed reaction is (S)-2,3,4,5-tetrahydrodipicolinate + NAD(+) + H2O = (2S,4S)-4-hydroxy-2,3,4,5-tetrahydrodipicolinate + NADH + H(+). It carries out the reaction (S)-2,3,4,5-tetrahydrodipicolinate + NADP(+) + H2O = (2S,4S)-4-hydroxy-2,3,4,5-tetrahydrodipicolinate + NADPH + H(+). Its pathway is amino-acid biosynthesis; L-lysine biosynthesis via DAP pathway; (S)-tetrahydrodipicolinate from L-aspartate: step 4/4. In terms of biological role, catalyzes the conversion of 4-hydroxy-tetrahydrodipicolinate (HTPA) to tetrahydrodipicolinate. The protein is 4-hydroxy-tetrahydrodipicolinate reductase of Lactococcus lactis subsp. cremoris (strain MG1363).